We begin with the raw amino-acid sequence, 382 residues long: D-galactonate dehydratase (382 aa).

D183 lines the Mg(2+) pocket. Residue H185 is the Proton donor of the active site. Mg(2+) contacts are provided by E209 and E235. H285 acts as the Proton acceptor in catalysis.

The protein belongs to the mandelate racemase/muconate lactonizing enzyme family. GalD subfamily. The cofactor is Mg(2+).

It carries out the reaction D-galactonate = 2-dehydro-3-deoxy-D-galactonate + H2O. The protein operates within carbohydrate acid metabolism; D-galactonate degradation; D-glyceraldehyde 3-phosphate and pyruvate from D-galactonate: step 1/3. In terms of biological role, catalyzes the dehydration of D-galactonate to 2-keto-3-deoxy-D-galactonate. The protein is D-galactonate dehydratase of Escherichia fergusonii (strain ATCC 35469 / DSM 13698 / CCUG 18766 / IAM 14443 / JCM 21226 / LMG 7866 / NBRC 102419 / NCTC 12128 / CDC 0568-73).